Reading from the N-terminus, the 642-residue chain is Uromodulin (642 aa).

An N-terminal signal peptide occupies residues 1–24; that stretch reads MGIPLTWMLLVMMVTSWFTLAEAS. Residues N25 and N38 are each glycosylated (N-linked (GlcNAc...) asparagine). The 37-residue stretch at 28 to 64 folds into the EGF-like 1 domain; that stretch reads EARRCSECHNNATCTVDGVVTTCSCQTGFTGDGLVCE. Cystine bridges form between C32-C41, C35-C50, C52-C63, C69-C82, C77-C91, C93-C105, C111-C125, C119-C134, C136-C147, C149-C160, C154-C171, C175-C268, C196-C283, C218-C256, C224-C288, C249-C257, C298-C307, C301-C316, C318-C348, C336-C426, and C367-C390. Residues 65–106 enclose the EGF-like 2; calcium-binding domain; that stretch reads DMDECATPWTHNCSNSSCVNTPGSFKCSCQDGFRLTPELSCT. Residues N76 and N79 are each glycosylated (N-linked (GlcNAc...) asparagine). The EGF-like 3; calcium-binding domain occupies 107–148; the sequence is DVDECSEQGLSNCHALATCVNTEGDYLCVCPEGFTGDGWYCE. The beta hairpin stretch occupies residues 149-172; that stretch reads CSPGSCEPGLDCLPQGPDGKLVCQ. Residues 173-292 are D10C; it reads DPCNTYETLT…CNLAYCTDPS (120 aa). Residue N233 is glycosylated (N-linked (GlcNAc...) asparagine). N276 carries N-linked (GlcNAc...) asparagine glycosylation. The EGF-like 4 domain occupies 293–324; it reads SVEGTCEECRVDEDCISDNGRWRCQCKQDSNI. N-linked (GlcNAc...) asparagine glycosylation occurs at N323. Residues 335-430 form a ZP-N region; that stretch reads ECGANDIKMS…RMNFECSYPL (96 aa). The ZP domain maps to 335–590; sequence ECGANDIKMS…PTCSGTRFRS (256 aa). Residues N397 and N448 are each glycosylated (N-linked (GlcNAc...) asparagine). The flexible ZP-N/ZP-C linker; important for secretion and polymerization into filaments stretch occupies residues 431 to 454; the sequence is DMKVSLKTSLQPMVSALNISLGGT. The tract at residues 455–465 is internal hydrophobic patch (IHP); the sequence is GKFTVRMALFQ. The segment at 455–590 is ZP-C; sequence GKFTVRMALF…PTCSGTRFRS (136 aa). 3 disulfides stabilise this stretch: C507-C567, C528-C583, and C572-C579. A glycan (N-linked (GlcNAc...) asparagine) is linked at N514. The segment at 587 to 590 is essential for cleavage by HPN; it reads RFRS. Residues 599–607 are external hydrophobic patch (EHP); regulates polymerization into filaments; sequence VLNLGPITR. A618 carries the GPI-anchor amidated alanine lipid modification. Residues 619 to 642 constitute a propeptide, removed in mature form; that stretch reads SSNLRLLSIWLLLFPSATLIFMVQ.

In terms of assembly, homodimer that then polymerizes into long filaments. The filaments can additionally assemble laterally to form a sheet. The filaments consist of a zigzag-shaped backbone with laterally protruding arms which interact with bacterial adhesin fimH. Two fimH molecules can bind to a single UMOD monomer. N-glycosylated. In terms of processing, proteolytically cleaved at a conserved C-terminal proteolytic cleavage site to generate the secreted form found in urine. This cleavage is catalyzed by HPN. In terms of tissue distribution, detected in urine (secreted form). Detected in kidney thick ascending limb epithelial cells (at protein level).

It is found in the secreted. The protein resides in the apical cell membrane. The protein localises to the basolateral cell membrane. Its subcellular location is the cell projection. It localises to the cilium membrane. Functionally, functions in biogenesis and organization of the apical membrane of epithelial cells of the thick ascending limb of Henle's loop (TALH), where it promotes formation of complex filamentous gel-like structure that may play a role in the water barrier permeability. May serve as a receptor for binding and endocytosis of cytokines (IL-1, IL-2) and TNF. Facilitates neutrophil migration across renal epithelia. Its function is as follows. In the urine, may contribute to colloid osmotic pressure, retards passage of positively charged electrolytes and inhibits formation of liquid containing supersaturated salts and subsequent formation of salt crystals. Protects against urinary tract infections by binding to type 1 fimbriated E.coli. Binds to the bacterial adhesin fimH which mediates the stable formation of bacterial aggregates, prevents the binding of E.coli to uroplakins UPK1A and UPK1B which act as urothelial receptors for type I fimbriae, and allows for pathogen clearance through micturation. Also promotes aggregation of other bacteria including K.pneumoniae, P.aeruginosa and S.mitis and so may also protect against other uropathogens. The protein is Uromodulin (Umod) of Mus musculus (Mouse).